Here is a 322-residue protein sequence, read N- to C-terminus: GATA transcription factor 8 (322 aa).

The disordered stretch occupies residues 93–168; that stretch reads TLVEKKEDSF…DKDRVKDNVC (76 aa). Low complexity predominate over residues 102 to 141; the sequence is FSTNTDSSSSHSQFRSSSPVSVLESSSSSSQTTNTTSLVL. The span at 144 to 154 shows a compositional bias: basic residues; sequence KHGRPRTKRPR. A Nuclear localization signal motif is present at residues 147-154; that stretch reads RPRTKRPR. The GATA-type zinc finger occupies 225-279; sequence QYPLRKCMHCEVTKTPQWRLGPMGPKTLCNACGVRYKSGRLFPEYRPAASPTFTP.

Belongs to the type IV zinc-finger family. Class A subfamily.

The protein resides in the nucleus. Transcriptional activator that specifically binds 5'-GATA-3' or 5'-GAT-3' motifs within gene promoters. May be involved in the regulation of some light-responsive genes. The polypeptide is GATA transcription factor 8 (GATA8) (Arabidopsis thaliana (Mouse-ear cress)).